The primary structure comprises 576 residues: Arginine--tRNA ligase (576 aa).

A 'HIGH' region motif is present at residues 126-136 (ANPTGPMHIGH).

It belongs to the class-I aminoacyl-tRNA synthetase family. In terms of assembly, monomer.

Its subcellular location is the cytoplasm. It catalyses the reaction tRNA(Arg) + L-arginine + ATP = L-arginyl-tRNA(Arg) + AMP + diphosphate. In Rickettsia canadensis (strain McKiel), this protein is Arginine--tRNA ligase.